The chain runs to 176 residues: Calcineurin subunit B type 2 (176 aa).

A lipid anchor (N-myristoyl glycine) is attached at Gly-2. EF-hand domains follow at residues Asp-18 to Pro-53, Arg-57 to Lys-85, Asp-87 to Asn-122, and Gln-128 to His-163. Asp-31, Asp-33, Ser-35, Ser-37, Glu-42, Asp-63, Asp-65, Asn-67, Glu-69, Glu-74, Asp-100, Asp-102, Asp-104, and Glu-111 together coordinate Ca(2+). The segment at Gln-131–Ser-136 is calcineurin A binding. Positions 141, 143, 145, 147, and 152 each coordinate Ca(2+).

This sequence belongs to the calcineurin regulatory subunit family. Forms a complex composed of a calmodulin-dependent catalytic subunit (also known as calcineurin A) and a regulatory Ca(2+)-binding subunit (also known as calcineurin B). There are three catalytic subunits, each encoded by a separate gene (PPP3CA, PPP3CB, and PPP3CC) and two regulatory subunits which are also encoded by separate genes (PPP3R1 and PPP3R2). Interacts with SPATA33 (via PQIIIT motif). In terms of tissue distribution, testis specific.

It is found in the mitochondrion. Functionally, regulatory subunit of calcineurin, a calcium-dependent, calmodulin stimulated protein phosphatase. Confers calcium sensitivity. The protein is Calcineurin subunit B type 2 (Ppp3r2) of Rattus norvegicus (Rat).